A 313-amino-acid chain; its full sequence is Porphobilinogen deaminase (313 aa).

At Cys-242 the chain carries S-(dipyrrolylmethanemethyl)cysteine.

This sequence belongs to the HMBS family. In terms of assembly, monomer. Dipyrromethane is required as a cofactor.

The catalysed reaction is 4 porphobilinogen + H2O = hydroxymethylbilane + 4 NH4(+). Its pathway is porphyrin-containing compound metabolism; protoporphyrin-IX biosynthesis; coproporphyrinogen-III from 5-aminolevulinate: step 2/4. Tetrapolymerization of the monopyrrole PBG into the hydroxymethylbilane pre-uroporphyrinogen in several discrete steps. The chain is Porphobilinogen deaminase from Enterobacter sp. (strain 638).